Consider the following 102-residue polypeptide: Integration host factor subunit beta (102 aa).

Belongs to the bacterial histone-like protein family. In terms of assembly, heterodimer of an alpha and a beta chain.

Its function is as follows. This protein is one of the two subunits of integration host factor, a specific DNA-binding protein that functions in genetic recombination as well as in transcriptional and translational control. In Rhizobium rhizogenes (strain K84 / ATCC BAA-868) (Agrobacterium radiobacter), this protein is Integration host factor subunit beta.